The primary structure comprises 127 residues: Large ribosomal subunit protein bL12 (127 aa).

Belongs to the bacterial ribosomal protein bL12 family. In terms of assembly, homodimer. Part of the ribosomal stalk of the 50S ribosomal subunit. Forms a multimeric L10(L12)X complex, where L10 forms an elongated spine to which 2 to 4 L12 dimers bind in a sequential fashion. Binds GTP-bound translation factors.

Forms part of the ribosomal stalk which helps the ribosome interact with GTP-bound translation factors. Is thus essential for accurate translation. The chain is Large ribosomal subunit protein bL12 from Pelobacter propionicus (strain DSM 2379 / NBRC 103807 / OttBd1).